The primary structure comprises 138 residues: Acidic phospholipase A2 VpaPLA2 (138 aa).

Residues 1–16 (MRTLWIVAVCLMGVEG) form the signal peptide. 7 disulfides stabilise this stretch: C42–C131, C44–C60, C59–C111, C65–C138, C66–C104, C73–C97, and C91–C102. Ca(2+) is bound by residues Y43, G45, and G47. The active site involves H63. D64 is a binding site for Ca(2+). D105 is an active-site residue.

The protein belongs to the phospholipase A2 family. Group II subfamily. D49 sub-subfamily. The cofactor is Ca(2+). As to expression, expressed by the venom gland.

The protein resides in the secreted. The catalysed reaction is a 1,2-diacyl-sn-glycero-3-phosphocholine + H2O = a 1-acyl-sn-glycero-3-phosphocholine + a fatty acid + H(+). Snake venom phospholipase A2 (PLA2) that causes a sudden decrease of arterial blood pressure when injected into rat, but is not lethal. When co-injected with an uncharacterized basic protein (which did not show any enzymatic activity, but also causes a drop in blood pressure), this synergistical mixture is lethal. PLA2 catalyzes the calcium-dependent hydrolysis of the 2-acyl groups in 3-sn-phosphoglycerides. This is Acidic phospholipase A2 VpaPLA2 from Daboia palaestinae (Palestine viper).